The primary structure comprises 152 residues: Gene 35 protein (152 aa).

The stretch at 86 to 120 (PKKVDILEELTDKVEELEANVSFEVDRIQGYQERY) forms a coiled coil.

This sequence belongs to the herpesviridae UL96 family.

The protein is Gene 35 protein (35) of Connochaetes taurinus (Blue wildebeest).